A 253-amino-acid polypeptide reads, in one-letter code: Probable transcriptional regulatory protein RAF_ORF0717 (253 aa).

The disordered stretch occupies residues methionine 1–arginine 21.

Belongs to the TACO1 family.

Its subcellular location is the cytoplasm. The protein is Probable transcriptional regulatory protein RAF_ORF0717 of Rickettsia africae (strain ESF-5).